A 258-amino-acid chain; its full sequence is Thiazole synthase 2 (258 aa).

Catalysis depends on lysine 97, which acts as the Schiff-base intermediate with DXP. Residues glycine 158, 184 to 185, and 206 to 207 contribute to the 1-deoxy-D-xylulose 5-phosphate site; these read AG and NT.

The protein belongs to the ThiG family. Homotetramer. Forms heterodimers with either ThiH or ThiS.

The protein localises to the cytoplasm. It catalyses the reaction [ThiS sulfur-carrier protein]-C-terminal-Gly-aminoethanethioate + 2-iminoacetate + 1-deoxy-D-xylulose 5-phosphate = [ThiS sulfur-carrier protein]-C-terminal Gly-Gly + 2-[(2R,5Z)-2-carboxy-4-methylthiazol-5(2H)-ylidene]ethyl phosphate + 2 H2O + H(+). It functions in the pathway cofactor biosynthesis; thiamine diphosphate biosynthesis. In terms of biological role, catalyzes the rearrangement of 1-deoxy-D-xylulose 5-phosphate (DXP) to produce the thiazole phosphate moiety of thiamine. Sulfur is provided by the thiocarboxylate moiety of the carrier protein ThiS. In vitro, sulfur can be provided by H(2)S. In Syntrophotalea carbinolica (strain DSM 2380 / NBRC 103641 / GraBd1) (Pelobacter carbinolicus), this protein is Thiazole synthase 2.